The primary structure comprises 148 residues: Probable histone H2A.1 (148 aa).

The segment covering 1 to 23 (MDASTKTKKGAGGRKGGPRKKSV) has biased composition (basic residues). 2 disordered regions span residues 1–28 (MDASTKTKKGAGGRKGGPRKKSVTRSTR) and 127–148 (KNEKAATTTKSPSKATKSPKKA). Residues 131–142 (AATTTKSPSKAT) show a composition bias toward low complexity. Short sequence motifs (SPKK motif) lie at residues 137–140 (SPSK) and 144–147 (SPKK).

It belongs to the histone H2A family. As to quaternary structure, the nucleosome is a histone octamer containing two molecules each of H2A, H2B, H3 and H4 assembled in one H3-H4 heterotetramer and two H2A-H2B heterodimers. The octamer wraps approximately 147 bp of DNA.

Its subcellular location is the nucleus. It is found in the chromosome. Its function is as follows. Core component of nucleosome. Nucleosomes wrap and compact DNA into chromatin, limiting DNA accessibility to the cellular machineries which require DNA as a template. Histones thereby play a central role in transcription regulation, DNA repair, DNA replication and chromosomal stability. DNA accessibility is regulated via a complex set of post-translational modifications of histones, also called histone code, and nucleosome remodeling. In Medicago truncatula (Barrel medic), this protein is Probable histone H2A.1.